The following is a 286-amino-acid chain: Polyamine aminopropyltransferase (286 aa).

The PABS domain maps to proline 6–aspartate 239. Glutamine 34 is a binding site for S-methyl-5'-thioadenosine. Spermidine-binding residues include histidine 65 and aspartate 89. S-methyl-5'-thioadenosine contacts are provided by residues glutamate 109 and aspartate 140–glycine 141. Aspartate 159 functions as the Proton acceptor in the catalytic mechanism. Residue aspartate 159–aspartate 162 participates in spermidine binding. An S-methyl-5'-thioadenosine-binding site is contributed by proline 166.

This sequence belongs to the spermidine/spermine synthase family. Homodimer or homotetramer. Homodimer.

The protein resides in the cytoplasm. It catalyses the reaction S-adenosyl 3-(methylsulfanyl)propylamine + putrescine = S-methyl-5'-thioadenosine + spermidine + H(+). It functions in the pathway amine and polyamine biosynthesis; spermidine biosynthesis; spermidine from putrescine: step 1/1. Functionally, catalyzes the irreversible transfer of a propylamine group from the amino donor S-adenosylmethioninamine (decarboxy-AdoMet) to putrescine (1,4-diaminobutane) to yield spermidine. The chain is Polyamine aminopropyltransferase from Synechococcus elongatus (strain ATCC 33912 / PCC 7942 / FACHB-805) (Anacystis nidulans R2).